Reading from the N-terminus, the 2179-residue chain is MTSPSDYQSNSSLATTYSNAPKLSKALSNKYDYLYEVDILKENQKISDTYLPLLNPYSAFAKRSVTPWSQIRSLVQSKPRHVKEYVAASKLDQHPVFATGEEQFVTLHIPEEFASHWKSHQFTHIHFGAVKIALTYHGRKGQPVVARLALLDTRYLEYQHANLGTAEITLNAGTVFITLFPNFTMSLSDANLSTALKIQVQIQGAPLTKDSIQATLHYQIAWRVQNHAMDLTLPGGEEALFLKIDAGSGATQCTQVPRQLSKEDLIKILPDSWVTNYEKLREPEEPLRSTEVSMSKRHDKSVAISFDHSHYKKLRNTHHFMGMISDDVIVLDDPETFSKTLPSLMQTHDWIHHFQLDGRAVSWYKDPFDGHCPWDIDCQCYSCLYSEDEEDFEDGFPTKYKGIPRPGSIAERKMQEEANLKKLYEEKDPFVGSLSRPGKYEYLVRYDAPSWAKDPHLTVEPTGWDSDEPIPPKQPFTTRNTLPKIYMFNPLNYENNFPPLSSFSKDGADHTPKIPKRNVVLPSGAKDPTGDLEATVNWQTENALAQNRMLTTIDRTLKETVTKVDRVTDQSSKNQGLIKVLEQQLQDLNKRICPPGTSLFHFFDQQKSEMASLKEQIRLLKEQPQKNETDTPSYQSSYQPFHSFSSPYMPSNPPNSPFTTFANTPQPQPSLFSQYPIQPKSPNTFDLAKLVWEKKDAIAAEKRAKKKLQKDEVKQKTSLPPESKRPDPQSSSHLGDQFMISDPALPKVYALNEPSVPSEDTSSQSYISTEESVEDTDSFSVVSEESTQLSQLSSSSNDSPENNENTLPQTFMVRPTEPEISEVEDEVDGMTEEPIPERRPEITPPKMVGTGFHTFSLDDISITKWPERIQDFHTWMLTKQLVEREPFLILSEFTARLSGTLREWWNSVGPDDKNRFLTSQDFTWNIRILYSYFCGDQSQNKEELRRQIFEMKCLSYDRKKIDRHFQRMIKLFYHIGGDISLKQAFISSLPPILSERISALIKERGTSVTQMHVGDIRQTAFYVLDDLCSKRKFFNQMKKMSRDLEKACTKSDLIIKGDKGCSGYCNPSRRRKYKRFKLPSFKERDGRQYRKRRRFFRRSKTSKAMRQKPRSCFTCGKIGHFSRNCPQNKKSIKLISEIQKYTGIDIEDDLESVFSIEDEPSEDTLFSLEFYEEYAGEQYQITSYEAPKTENPPLPKIHTIVEIPQTEVKIYTSKWDKPISVIAFYDTGAAYSIMDPAILPSEYWIPHFRHFGTADDGILTTTVKTKHPITIEFFPGFKYTTKLLGSDIPGKDLLIGFDIYRQLNNKLRIGADGIRWKNQFKRYTEIPRLFQLTTSNELQQLEDVIKNQLCADSHVDFLSKCSHPLWLNQDFFIQLPFKKNENINPTKASHSGMNPEHLQLAIKECDELQQFDLIEPSDSQWACEAFYVNKRSEQVRGKLRLVINYQPLNHFLQDDKFPIPNKLTLFSHLSKAKLFSKFDLKSGFWQLGIHPNERPKTGFCIPDRHFQWKVMPFGLKTAPSLFQKAMIKIFQPILFSALVYIDDILLFSETLEDHIKLLNQFISLVKKFGVMLSAKKMILAQNKIQFLGMDFADGTFSPAGHISLELQKFPDTNLSVKQIQQFLGIVNYIRDFIPEVTEHISPLSDMLKKKPPAWGKCQDNAVKQLKQLAQQVKSLHIPSEGKKILQTDASDQYWSAVLLEEHNGKRKICGFASGKFKVSEQHYHSTFKEILAVKNGIKKFNFFLIHTNFLVEMDMRAFPKMIRLNPKIVPNSQLLRWAQWFSPYQFEVKHLKGKDNILADFLSRPHEFSQRLKNSPKVLMFQRRTRSSSTKSKADSSQSTGSSYKLSHNLPENPPEVFNLDYPWDTSVFLERRTFYELQVFKKYGGSILRPFGVDPEYPFAHIFIPNPTDFSEDLLWMFWYLLNHFHILMKFRCSKFSKIDQVNPWMLKFLLWFNNHNYWASLFKCMKGIKKYVVIWFYRPVNYYQGKLCALPHSSIVKWNHVSVLNDEDEYSELQRFIFQENKCIPKEIWPGSSGSWNYGNSDHPHGQWIRDALREYREMNDYFQDAQDPYPAYSKVDLTQEELNTLRITRSYGSSSEDADMVKRSIYTVQSNIVKDSPRKRKGKAKSRSSTRSEKRRAKNKCKYRSLHGEDWWIELGYSTKPSTPSWTQDSSSEPCV.

Disordered stretches follow at residues 503-531 (FSKDGADHTPKIPKRNVVLPSGAKDPTGD), 623-678 (QPQK…YPIQ), 703-738 (RAKKKLQKDEVKQKTSLPPESKRPDPQSSSHLGDQF), and 753-847 (EPSV…PPKM). Composition is skewed to polar residues over residues 630-642 (DTPSYQSSYQPFH) and 659-678 (TTFANTPQPQPSLFSQYPIQ). The segment covering 758 to 770 (SEDTSSQSYISTE) has biased composition (polar residues). Low complexity predominate over residues 783 to 806 (SEESTQLSQLSSSSNDSPENNENT). Positions 819 to 831 (EISEVEDEVDGMT) are enriched in acidic residues. A CCHC-type zinc finger spans residues 1112 to 1125 (CFTCGKIGHFSRNC). Asp1226 acts as the For protease activity; shared with dimeric partner in catalysis. The 183-residue stretch at 1409 to 1591 (QQFDLIEPSD…NKIQFLGMDF (183 aa)) folds into the Reverse transcriptase domain. Mg(2+) contacts are provided by Asp1479, Asp1542, and Asp1543. Disordered regions lie at residues 1822–1848 (QRRTRSSSTKSKADSSQSTGSSYKLSH), 2114–2144 (NIVKDSPRKRKGKAKSRSSTRSEKRRAKNKC), and 2160–2179 (YSTKPSTPSWTQDSSSEPCV). A compositionally biased stretch (low complexity) spans 1827–1840 (SSSTKSKADSSQST). Basic residues predominate over residues 2120 to 2144 (PRKRKGKAKSRSSTRSEKRRAKNKC). Polar residues predominate over residues 2162–2179 (TKPSTPSWTQDSSSEPCV).

Belongs to the Petuviruses genome polyprotein family.

It carries out the reaction DNA(n) + a 2'-deoxyribonucleoside 5'-triphosphate = DNA(n+1) + diphosphate. Encodes presumably for at least four polypeptides: Movement protein (MP), capsid protein (CP), Protease (PR), and reverse transcriptase (RT). In Petunia vein clearing virus (isolate Shepherd) (PVCV), this protein is Genome polyprotein.